Reading from the N-terminus, the 321-residue chain is Cytochrome c biogenesis protein CcsA (321 aa).

8 helical membrane passes run 9 to 29, 44 to 64, 71 to 91, 98 to 118, 143 to 163, 225 to 245, 260 to 280, and 288 to 308; these read ILTHISFSIISIVITIHLMTL, GIISTFFSITGLLITRWIYSG, LYESLIFLSWSFSIIHMIPYL, LSVITVPSVIFTQGFVTSCLS, MLLSYATLLCGSLLSVALLVI, IISLGFIFLTMGILSGAVWAN, WAFITWTIFAIYSHIRININF, and VASIGFLIIWICYFGINLLGI.

This sequence belongs to the CcmF/CycK/Ccl1/NrfE/CcsA family. In terms of assembly, may interact with Ccs1.

Its subcellular location is the plastid. The protein resides in the chloroplast thylakoid membrane. Its function is as follows. Required during biogenesis of c-type cytochromes (cytochrome c6 and cytochrome f) at the step of heme attachment. The chain is Cytochrome c biogenesis protein CcsA from Dioscorea elephantipes (Elephant's foot yam).